The primary structure comprises 544 residues: GDP-mannose 4,6-dehydratase sdnI (544 aa).

NADP(+) is bound by residues 16 to 21, R41, 64 to 65, and 86 to 90; these read GITGQD, DM, and LAAQS. Residue S90 participates in substrate binding. Catalysis depends on nucleophile residues E135 and Y157. Y157 contacts substrate. K161 provides a ligand contact to NADP(+). N186 provides a ligand contact to substrate. NADP(+) contacts are provided by H187 and R192. Substrate is bound by residues 192-200, G219, R225, and 303-306; these read RGTTFVTRK and RPVE. Residues 366–406 form a disordered region; the sequence is GETTSAVNSSPSSTAGDTYKASDGWSTSGAEGSEQTECSSV. 2 stretches are compositionally biased toward polar residues: residues 368 to 381 and 389 to 404; these read TTSA…STAG and GWST…TECS.

This sequence belongs to the NAD(P)-dependent epimerase/dehydratase family. GDP-mannose 4,6-dehydratase subfamily. It depends on NADP(+) as a cofactor.

It catalyses the reaction GDP-alpha-D-mannose = GDP-4-dehydro-alpha-D-rhamnose + H2O. The protein operates within antibiotic biosynthesis. In terms of biological role, GDP-mannose 4,6-dehydratase; part of the gene cluster that mediates the biosynthesis of sordarin and hypoxysordarin, glycoside antibiotics with a unique tetracyclic diterpene aglycone structure. First, the geranylgeranyl diphosphate synthase sdnC constructs GGDP from farnesyl diphosphate and isopentenyl diphosphate. The diterpene cyclase sdnA then catalyzes the cyclization of GGDP to afford cycloaraneosene. Cycloaraneosene is then hydroxylated four times by the putative cytochrome P450 monooxygenases sdnB, sdnE, sdnF and sdnH to give a hydroxylated cycloaraneosene derivative such as cycloaraneosene-8,9,13,19-tetraol. Although the order of the hydroxylations is unclear, at least C8, C9 and C13 of the cycloaraneosene skeleton are hydroxylated before the sordaricin formation. Dehydration of the 13-hydroxy group of the hydroxylated cycloaraneosene derivative might be catalyzed by an unassigned hypothetical protein such as sdnG and sdnP to construct the cyclopentadiene moiety. The FAD-dependent oxidoreductase sdnN is proposed to catalyze the oxidation at C9 of the hydroxylated cycloaraneosene derivative and also catalyze the Baeyer-Villiger oxidation to give the lactone intermediate. The presumed lactone intermediate would be hydrolyzed to give an acrolein moiety and a carboxylate moiety. Then, [4+2]cycloaddition would occur between the acrolein moiety and the cyclopentadiene moiety to give sordaricin. SdnN might also be involved in the [4+2]cycloaddition after the hypothesized oxidation to accommodate the oxidized product and prompt the [4+2]cycloaddition. GDP-6-deoxy-D-altrose may be biosynthesized from GDP-D-mannose by the putative GDP-mannose-4,6-dehydratase sdnI and the short-chain dehydrogenase sdnK. The glycosyltransferase sdnJ catalyzes the attachment of 6-deoxy-D-altrose onto the 19-hydroxy group of sordaricin to give 4'-O-demethylsordarin. The methyltransferase sdnD would complete the biosynthesis of sordarin. Sordarin can be further modified into hypoxysordarin. The unique acyl chain at the 3'-hydroxy group of hypoxysordarin would be constructed by an iterative type I PKS sdnO and the trans-acting polyketide methyltransferase sdnL. SdnL would be responsible for the introduction of an alpha-methyl group of the polyketide chain. Alternatively, the beta-lactamase-like protein sdnR might be responsible for the cleavage and transfer of the polyketide chain from the PKS sdnO to sordarin. Two putative cytochrome P450 monooxygenases, sdnQ and sdnT, might catalyze the epoxidations of the polyketide chain to complete the biosynthesis of hypoxysordarin. Transcriptional regulators sdnM and sdnS are presumably encoded for the transcriptional regulation of the expression of the sdn gene cluster. This Sordaria araneosa (Pleurage araneosa) protein is GDP-mannose 4,6-dehydratase sdnI.